Reading from the N-terminus, the 767-residue chain is Lysyl oxidase homolog 2 (767 aa).

The first 19 residues, 1–19 (MLVTHIFLLTLSLSVPTLG), serve as a signal peptide directing secretion. SRCR domains are found at residues 51–152 (VRLA…VQCS), 181–295 (IRAI…VSCT), 319–418 (VRLR…VRCN), and 428–537 (VRLS…VSCV). 9 cysteine pairs are disulfide-bonded: C77–C141, C90–C151, C121–C131, C211–C284, C224–C294, C258–C268, C344–C407, C357–C417, and C388–C398. N281 is a glycosylation site (N-linked (GlcNAc...) asparagine). N448 carries N-linked (GlcNAc...) asparagine glycosylation. Cystine bridges form between C457-C523, C470-C536, and C504-C514. The segment at 541–744 (PDLVLNAALV…WMYNCHIGGS (204 aa)) is lysyl-oxidase like. Ca(2+) contacts are provided by D542 and L543. Intrachain disulfides connect C566-C618, C572-C688, C650-C666, and C656-C678. H619, H621, and H623 together coordinate Cu cation. N-linked (GlcNAc...) asparagine glycosylation is present at N637. Residues 646–682 (KASFCLEDSECETDVQKQYACANFGEQGITVGCWDVY) constitute a cross-link (lysine tyrosylquinone (Lys-Tyr)). Residue Y682 is modified to 2',4',5'-topaquinone. Residues E715, D717, N720, and N721 each coordinate Ca(2+). Residues C725 and C739 are joined by a disulfide bond.

Belongs to the lysyl oxidase family. Cu cation is required as a cofactor. Requires lysine tyrosylquinone residue as cofactor. In terms of processing, the lysine tyrosylquinone cross-link (LTQ) is generated by condensation of the epsilon-amino group of a lysine with a topaquinone produced by oxidation of tyrosine.

Its subcellular location is the secreted. The protein localises to the extracellular space. The protein resides in the extracellular matrix. It localises to the basement membrane. It is found in the nucleus. Its subcellular location is the chromosome. The protein localises to the endoplasmic reticulum. It catalyses the reaction L-lysyl-[protein] + O2 + H2O = (S)-2-amino-6-oxohexanoyl-[protein] + H2O2 + NH4(+). Its function is as follows. Mediates the post-translational oxidative deamination of lysine residues on target proteins leading to the formation of deaminated lysine (allysine). Acts as a transcription corepressor and specifically mediates deamination of trimethylated 'Lys-4' of histone H3 (H3K4me3), a specific tag for epigenetic transcriptional activation. Shows no activity against histone H3 when it is trimethylated on 'Lys-9' (H3K9me3) or 'Lys-27' (H3K27me3) or when 'Lys-4' is monomethylated (H3K4me1) or dimethylated (H3K4me2). Also mediates deamination of methylated TAF10, a member of the transcription factor IID (TFIID) complex, which induces release of TAF10 from promoters, leading to inhibition of TFIID-dependent transcription. LOXL2-mediated deamination of TAF10 results in transcriptional repression of genes required for embryonic stem cell pluripotency. Involved in epithelial to mesenchymal transition (EMT) and participates in repression of E-cadherin, probably by mediating deamination of histone H3. When secreted into the extracellular matrix, promotes cross-linking of extracellular matrix proteins by mediating oxidative deamination of peptidyl lysine residues in precursors to fibrous collagen and elastin. Acts as a regulator of sprouting angiogenesis, probably via collagen IV scaffolding. Acts as a regulator of chondrocyte differentiation, probably by regulating expression of factors that control chondrocyte differentiation. In Xenopus tropicalis (Western clawed frog), this protein is Lysyl oxidase homolog 2 (loxl2).